Consider the following 120-residue polypeptide: Ribonuclease P protein component (120 aa).

This sequence belongs to the RnpA family. As to quaternary structure, consists of a catalytic RNA component (M1 or rnpB) and a protein subunit.

It catalyses the reaction Endonucleolytic cleavage of RNA, removing 5'-extranucleotides from tRNA precursor.. Its function is as follows. RNaseP catalyzes the removal of the 5'-leader sequence from pre-tRNA to produce the mature 5'-terminus. It can also cleave other RNA substrates such as 4.5S RNA. The protein component plays an auxiliary but essential role in vivo by binding to the 5'-leader sequence and broadening the substrate specificity of the ribozyme. The sequence is that of Ribonuclease P protein component from Chlamydia trachomatis serovar A (strain ATCC VR-571B / DSM 19440 / HAR-13).